A 167-amino-acid chain; its full sequence is NADH-quinone oxidoreductase subunit B 2 (167 aa).

Residues cysteine 39, cysteine 40, cysteine 104, and cysteine 134 each coordinate [4Fe-4S] cluster.

It belongs to the complex I 20 kDa subunit family. In terms of assembly, NDH-1 is composed of 14 different subunits. Subunits NuoB, C, D, E, F, and G constitute the peripheral sector of the complex. The cofactor is [4Fe-4S] cluster.

It localises to the cell inner membrane. The enzyme catalyses a quinone + NADH + 5 H(+)(in) = a quinol + NAD(+) + 4 H(+)(out). Functionally, NDH-1 shuttles electrons from NADH, via FMN and iron-sulfur (Fe-S) centers, to quinones in the respiratory chain. Couples the redox reaction to proton translocation (for every two electrons transferred, four hydrogen ions are translocated across the cytoplasmic membrane), and thus conserves the redox energy in a proton gradient. In Burkholderia mallei (strain NCTC 10247), this protein is NADH-quinone oxidoreductase subunit B 2.